The sequence spans 464 residues: Soluble pyridine nucleotide transhydrogenase (464 aa).

35–44 (DSRRVVGGNC) is an FAD binding site.

The protein belongs to the class-I pyridine nucleotide-disulfide oxidoreductase family. It depends on FAD as a cofactor.

The protein resides in the cytoplasm. The enzyme catalyses NAD(+) + NADPH = NADH + NADP(+). Conversion of NADPH, generated by peripheral catabolic pathways, to NADH, which can enter the respiratory chain for energy generation. This Pseudomonas aeruginosa (strain LESB58) protein is Soluble pyridine nucleotide transhydrogenase.